We begin with the raw amino-acid sequence, 634 residues long: TATA box-binding protein-associated factor RNA polymerase I subunit B (634 aa).

The RRN7-type zinc finger occupies 19-51; it reads LVCEYCGHGSEYAEDDADNGFFTCRQCSAIHTS. 4 residues coordinate Zn(2+): C21, C24, C42, and C45. The tract at residues 51-80 is B-reader; that stretch reads STQNTATNPFDFPMTPAHLSAHRRPTQPTP. The interval 56 to 117 is disordered; it reads ATNPFDFPMT…EPRDFATGAN (62 aa). A compositionally biased stretch (pro residues) spans 77–87; it reads QPTPTPKPFPA. The tract at residues 81 to 83 is B-linker; it reads TPK. The N-terminal cyclin fold stretch occupies residues 84 to 281; the sequence is PFPAPRGAAT…DKLLGSSLND (198 aa). A compositionally biased stretch (low complexity) spans 88–98; it reads PRGAATGAAAP. The tract at residues 282–284 is C-terminal cyclin fold; the sequence is CPL.

Belongs to the RRN7/TAF1B family.

Its subcellular location is the nucleus. It localises to the nucleolus. Its function is as follows. Component of RNA polymerase I core factor complex that acts as a GTF2B/TFIIB-like factor and plays a key role in multiple steps during transcription initiation such as pre-initiation complex (PIC) assembly and postpolymerase recruitment events in polymerase I (Pol I) transcription. Binds rDNA promoters and plays a role in Pol I recruitment. In Oryza sativa subsp. indica (Rice), this protein is TATA box-binding protein-associated factor RNA polymerase I subunit B.